The primary structure comprises 186 residues: Secreted chorismate mutase (186 aa).

The N-terminal stretch at 1–30 (MQPTHTLTRLTVIGKLIIASSFFLSLAVQA) is a signal peptide. In terms of domain architecture, Chorismate mutase spans 31 to 107 (QQCGQTAPLI…AAKAIQYRYR (77 aa)). A disulfide bond links Cys-33 and Cys-148. Substrate contacts are provided by residues Arg-43, Lys-54, Asp-63, 99–103 (AKAIQ), and Arg-127.

As to quaternary structure, homodimer.

The protein resides in the periplasm. It catalyses the reaction chorismate = prephenate. Its pathway is metabolic intermediate biosynthesis; prephenate biosynthesis; prephenate from chorismate: step 1/1. Catalyzes the Claisen rearrangement of chorismate to prephenate. May play some role in the pathogenicity. This is Secreted chorismate mutase (pheA2) from Yersinia pestis.